A 558-amino-acid polypeptide reads, in one-letter code: Leucine-rich repeat-containing protein 71 (558 aa).

A compositionally biased stretch (low complexity) spans 1 to 18 (MSSEPSTTGTSPRTPRPG). Disordered regions lie at residues 1–55 (MSSE…NPEE) and 86–112 (RVQQ…SASC). Residues 28 to 38 (KKGDRAAKDKT) show a composition bias toward basic and acidic residues. A compositionally biased stretch (polar residues) spans 86–99 (RVQQSSVPSASTSE). 4 LRR repeats span residues 196-216 (TLRK…SKLM), 221-241 (TIVH…QLLG), 253-274 (TLVS…YIAD), and 281-302 (SLLW…KLAE). A disordered region spans residues 325–415 (GTQERSRSPS…DAAKAGKGKV (91 aa)). Composition is skewed to basic and acidic residues over residues 339–348 (GDSKAEREKS) and 380–391 (KTGEVVKKEEKL).

This is Leucine-rich repeat-containing protein 71 (Lrrc71) from Mus musculus (Mouse).